Consider the following 674-residue polypeptide: Early transcription factor 70 kDa subunit (674 aa).

The Helicase ATP-binding domain occupies 34-193 (ERSLKEKKSV…KDIVELLTNE (160 aa)). 45 to 52 (LFHKMGSG) provides a ligand contact to ATP. The short motif at 135 to 138 (YDNY) is the DEXH box element.

It belongs to the helicase family. VETF subfamily. In terms of assembly, heterodimer of a 70 kDa and a 82 kDa subunit. Part of the early transcription complex composed of ETF, RAP94, and the DNA-directed RNA polymerase.

The protein resides in the virion. In terms of biological role, acts with RNA polymerase to initiate transcription from early gene promoters. Is recruited by the RPO-associated protein of 94 kDa (RAP94) to form the early transcription complex, which also contains the core RNA polymerase. ETF heterodimer binds to early gene promoters. This chain is Early transcription factor 70 kDa subunit (VETFS), found in Melanoplus sanguinipes entomopoxvirus (MsEPV).